A 250-amino-acid polypeptide reads, in one-letter code: Golgi SNAP receptor complex member 1 (250 aa).

An N-acetylalanine modification is found at Ala-2. At 2–229 (AAGTSNYWED…QRINLRKRRD (228 aa)) the chain is on the cytoplasmic side. Residues 9-30 (WEDLRKQARQLENELDLKLVSF) are a coiled coil. Positions 37 to 59 (YSHSSARDGGRDRYSSDTTPLLN) are disordered. Positions 41–51 (SARDGGRDRYS) are enriched in basic and acidic residues. Positions 68–95 (ETMAIEIEQLLARLTGVNDKMAEYTHSA) form a coiled coil. Position 141 is a phosphoserine (Ser-141). A helical; Anchor for type IV membrane protein transmembrane segment spans residues 230–250 (SLILGGVIGICTILLLLYAFH).

It belongs to the GOSR1 family. As to quaternary structure, component of several multiprotein Golgi SNARE complexes. Identified in a SNARE complex with BET1, STX5 and YKT6, in a SNARE complex with BET1L, STX5 and YKT6, in a SNARE complex with STX5, GOSR2, SEC22B and BET1, and in complex with STX5 and COG3. Interacts with GABARAPL2. Interacts with the 34 kDa STX5 isoform.

The protein resides in the golgi apparatus membrane. In terms of biological role, involved in transport from the ER to the Golgi apparatus as well as in intra-Golgi transport. It belongs to a super-family of proteins called t-SNAREs or soluble NSF (N-ethylmaleimide-sensitive factor) attachment protein receptor. May play a protective role against hydrogen peroxide induced cytotoxicity under glutathione depleted conditions in neuronal cells by regulating the intracellular ROS levels via inhibition of p38 MAPK (MAPK11, MAPK12, MAPK13 and MAPK14). Participates in docking and fusion stage of ER to cis-Golgi transport. Plays an important physiological role in VLDL-transport vesicle-Golgi fusion and thus in VLDL delivery to the hepatic cis-Golgi. This Rattus norvegicus (Rat) protein is Golgi SNAP receptor complex member 1 (Gosr1).